Here is a 505-residue protein sequence, read N- to C-terminus: Catalase (505 aa).

The disordered stretch occupies residues 1 to 25; the sequence is MSKQDGKLTGLFGAPVSDRENSMTA. Residues His-56 and Asn-129 contribute to the active site. A heme-binding site is contributed by Tyr-339.

The protein belongs to the catalase family. As to quaternary structure, homodimer. Heme is required as a cofactor.

It catalyses the reaction 2 H2O2 = O2 + 2 H2O. Its function is as follows. Decomposes hydrogen peroxide into water and oxygen; serves to protect cells from the toxic effects of hydrogen peroxide. The protein is Catalase (katA) of Staphylococcus warneri.